A 169-amino-acid chain; its full sequence is MAVLQVLHIPDERLRKVAKPVEEVNAEIQRIVDDMFETMYAEEGIGLAATQVDIHQRIIVIDVSENRDERLVLINPELLEKSGETGIEEGCLSIPEQRALVPRAEKVKIRALDRDGKSFELEADGLLAICIQHEMDHLVGKLFIDYLSPLKQQRIRQKVEKLDRLNARA.

Fe cation-binding residues include C91 and H133. Residue E134 is part of the active site. H137 lines the Fe cation pocket.

The protein belongs to the polypeptide deformylase family. Fe(2+) is required as a cofactor.

It carries out the reaction N-terminal N-formyl-L-methionyl-[peptide] + H2O = N-terminal L-methionyl-[peptide] + formate. In terms of biological role, removes the formyl group from the N-terminal Met of newly synthesized proteins. Requires at least a dipeptide for an efficient rate of reaction. N-terminal L-methionine is a prerequisite for activity but the enzyme has broad specificity at other positions. In Citrobacter koseri (strain ATCC BAA-895 / CDC 4225-83 / SGSC4696), this protein is Peptide deformylase.